Consider the following 312-residue polypeptide: Zinc finger CCCH domain-containing protein 25 (312 aa).

The region spanning 36 to 114 is the RRM domain; it reads AYVFVGGIPY…RIVRVDHVSK (79 aa). The C3H1-type zinc-finger motif lies at 130–157; the sequence is REARGVCYAFQKGECNRGASCRYSHDEQ. Positions 153 to 312 are disordered; that stretch reads SHDEQRNANT…DSERYRKSRR (160 aa). Basic and acidic residues-rich tracts occupy residues 166–184, 197–210, and 219–312; these read SKEE…EPPM, RFPD…KSTG, and EAYK…KSRR.

The chain is Zinc finger CCCH domain-containing protein 25 from Oryza sativa subsp. japonica (Rice).